The following is a 407-amino-acid chain: Phosphopentomutase (407 aa).

6 residues coordinate Mn(2+): D10, D306, H311, D347, H348, and H359.

The protein belongs to the phosphopentomutase family. Requires Mn(2+) as cofactor.

Its subcellular location is the cytoplasm. It catalyses the reaction 2-deoxy-alpha-D-ribose 1-phosphate = 2-deoxy-D-ribose 5-phosphate. The enzyme catalyses alpha-D-ribose 1-phosphate = D-ribose 5-phosphate. It functions in the pathway carbohydrate degradation; 2-deoxy-D-ribose 1-phosphate degradation; D-glyceraldehyde 3-phosphate and acetaldehyde from 2-deoxy-alpha-D-ribose 1-phosphate: step 1/2. Functionally, isomerase that catalyzes the conversion of deoxy-ribose 1-phosphate (dRib-1-P) and ribose 1-phosphate (Rib-1-P) to deoxy-ribose 5-phosphate (dRib-5-P) and ribose 5-phosphate (Rib-5-P), respectively. The chain is Phosphopentomutase from Sodalis glossinidius (strain morsitans).